The sequence spans 156 residues: ATP synthase subunit b (156 aa).

Residues 7–27 (LIAQFVVFFILAGFTMKFVWP) traverse the membrane as a helical segment.

This sequence belongs to the ATPase B chain family. As to quaternary structure, F-type ATPases have 2 components, F(1) - the catalytic core - and F(0) - the membrane proton channel. F(1) has five subunits: alpha(3), beta(3), gamma(1), delta(1), epsilon(1). F(0) has three main subunits: a(1), b(2) and c(10-14). The alpha and beta chains form an alternating ring which encloses part of the gamma chain. F(1) is attached to F(0) by a central stalk formed by the gamma and epsilon chains, while a peripheral stalk is formed by the delta and b chains.

The protein localises to the cell inner membrane. Its function is as follows. F(1)F(0) ATP synthase produces ATP from ADP in the presence of a proton or sodium gradient. F-type ATPases consist of two structural domains, F(1) containing the extramembraneous catalytic core and F(0) containing the membrane proton channel, linked together by a central stalk and a peripheral stalk. During catalysis, ATP synthesis in the catalytic domain of F(1) is coupled via a rotary mechanism of the central stalk subunits to proton translocation. Functionally, component of the F(0) channel, it forms part of the peripheral stalk, linking F(1) to F(0). This is ATP synthase subunit b from Herminiimonas arsenicoxydans.